The chain runs to 549 residues: Longitudinals lacking protein, isoforms H/M/V (549 aa).

The BTB domain occupies 32 to 97; that stretch reads VDCTLAAEGK…MYRGEVNISQ (66 aa). Disordered regions lie at residues 115–200 and 228–340; these read LSDN…SSVL and SSGP…ASAS. Composition is skewed to low complexity over residues 162 to 175, 228 to 251, 263 to 293, and 329 to 340; these read SGDV…SSSP, SSGP…LTST, TSST…QTTS, and NSATGPNPASAS.

In terms of tissue distribution, mostly neuronal.

Its subcellular location is the nucleus. Putative transcription factor required for axon growth and guidance in the central and peripheral nervous systems. Repels CNS axons away from the midline by promoting the expression of the midline repellent sli and its receptor robo. This chain is Longitudinals lacking protein, isoforms H/M/V, found in Drosophila melanogaster (Fruit fly).